The sequence spans 317 residues: MSFANADTPPQVVVLGAGAWGSSLAYVLNNNDIPTQVWSRRSPQSLESMVAGADVIVSAVSIKGVPSVAARLEAMDLQRRTILVTATKGLDPETMTTPSQIWQAALPSQPIAVLSGPNLSKEIDQGLPAATVVASSDQAAAEEIQTIFAADNFRVYTNNDPLGTELGGTLKNVMAIAVGVCEGLGLGTNAKSALITRALPEITRVGLHFGAQPDTFWGLAGLGDLLATCSSMLSRNYRVGYGLSKGQSLEEILANLGGTAEGVNTTDVLIKIANREKIAVPITRQVYRLLHGKITPPQAVEALMERELKAEFEDFDL.

Positions 20, 40, 41, and 88 each coordinate NADPH. Positions 88 and 116 each coordinate sn-glycerol 3-phosphate. An NADPH-binding site is contributed by Ser-120. Residues Lys-171, Asp-224, Ser-234, Arg-235, and Asn-236 each coordinate sn-glycerol 3-phosphate. The active-site Proton acceptor is the Lys-171. Arg-235 provides a ligand contact to NADPH. Glu-261 contacts NADPH.

It belongs to the NAD-dependent glycerol-3-phosphate dehydrogenase family.

Its subcellular location is the cytoplasm. The enzyme catalyses sn-glycerol 3-phosphate + NAD(+) = dihydroxyacetone phosphate + NADH + H(+). It carries out the reaction sn-glycerol 3-phosphate + NADP(+) = dihydroxyacetone phosphate + NADPH + H(+). Its pathway is membrane lipid metabolism; glycerophospholipid metabolism. Functionally, catalyzes the reduction of the glycolytic intermediate dihydroxyacetone phosphate (DHAP) to sn-glycerol 3-phosphate (G3P), the key precursor for phospholipid synthesis. The polypeptide is Glycerol-3-phosphate dehydrogenase [NAD(P)+] (Synechocystis sp. (strain ATCC 27184 / PCC 6803 / Kazusa)).